Reading from the N-terminus, the 341-residue chain is Trimethylamine N-oxide transport system ATP-binding protein TmoW (341 aa).

The ABC transporter domain maps to 6-265 (IKCESVYKIF…PATEYVRKFT (260 aa)). 61–68 (GLSGSGKS) contributes to the ATP binding site.

It belongs to the ABC transporter superfamily. In terms of assembly, the complex is probably composed of two ATP-binding proteins (TmoW), two transmembrane proteins (TmoV) and a solute-binding protein (TmoX).

It localises to the cell inner membrane. The enzyme catalyses a quaternary ammonium(out) + ATP + H2O = a quaternary ammonium(in) + ADP + phosphate + H(+). In terms of biological role, part of the ABC transporter complex TmoXWV involved in trimethylamine N-oxide (TMAO) import. Responsible for energy coupling to the transport system. The sequence is that of Trimethylamine N-oxide transport system ATP-binding protein TmoW from Pelagibacter ubique (strain HTCC1062).